We begin with the raw amino-acid sequence, 63 residues long: Cytotoxin homolog S3C2 (63 aa).

Cystine bridges form between Cys-3/Cys-22, Cys-15/Cys-40, Cys-44/Cys-55, and Cys-56/Cys-61.

The protein belongs to the three-finger toxin family. Short-chain subfamily. Orphan group XVI sub-subfamily. Expressed by the venom gland.

Its subcellular location is the secreted. The chain is Cytotoxin homolog S3C2 from Aspidelaps scutatus (Shield-nose snake).